Reading from the N-terminus, the 187-residue chain is Probable chorismate pyruvate-lyase (187 aa).

Positions 77, 115, and 174 each coordinate substrate.

The protein belongs to the UbiC family.

It localises to the cytoplasm. It carries out the reaction chorismate = 4-hydroxybenzoate + pyruvate. It participates in cofactor biosynthesis; ubiquinone biosynthesis. In terms of biological role, removes the pyruvyl group from chorismate, with concomitant aromatization of the ring, to provide 4-hydroxybenzoate (4HB) for the ubiquinone pathway. This is Probable chorismate pyruvate-lyase from Shewanella sp. (strain ANA-3).